Reading from the N-terminus, the 160-residue chain is Cytochrome b6-f complex subunit 4 (160 aa).

A run of 3 helical transmembrane segments spans residues 36–56, 95–115, and 131–151; these read LLYV…ALAV, LLGV…PFIE, and TVFL…ALPL.

This sequence belongs to the cytochrome b family. PetD subfamily. In terms of assembly, the 4 large subunits of the cytochrome b6-f complex are cytochrome b6, subunit IV (17 kDa polypeptide, PetD), cytochrome f and the Rieske protein, while the 4 small subunits are PetG, PetL, PetM and PetN. The complex functions as a dimer.

Its subcellular location is the cellular thylakoid membrane. Functionally, component of the cytochrome b6-f complex, which mediates electron transfer between photosystem II (PSII) and photosystem I (PSI), cyclic electron flow around PSI, and state transitions. The chain is Cytochrome b6-f complex subunit 4 from Nostoc punctiforme (strain ATCC 29133 / PCC 73102).